A 275-amino-acid chain; its full sequence is 3-methyl-2-oxobutanoate hydroxymethyltransferase (275 aa).

Mg(2+)-binding residues include D44 and D83. 3-methyl-2-oxobutanoate-binding positions include 44 to 45, D83, and K113; that span reads DS. Mg(2+) is bound at residue E115. E182 serves as the catalytic Proton acceptor.

The protein belongs to the PanB family. Homodecamer; pentamer of dimers. Mg(2+) serves as cofactor.

The protein resides in the cytoplasm. It catalyses the reaction 3-methyl-2-oxobutanoate + (6R)-5,10-methylene-5,6,7,8-tetrahydrofolate + H2O = 2-dehydropantoate + (6S)-5,6,7,8-tetrahydrofolate. It participates in cofactor biosynthesis; (R)-pantothenate biosynthesis; (R)-pantoate from 3-methyl-2-oxobutanoate: step 1/2. Functionally, catalyzes the reversible reaction in which hydroxymethyl group from 5,10-methylenetetrahydrofolate is transferred onto alpha-ketoisovalerate to form ketopantoate. This chain is 3-methyl-2-oxobutanoate hydroxymethyltransferase, found in Clostridium botulinum (strain Loch Maree / Type A3).